A 349-amino-acid chain; its full sequence is Bifunctional nitrilase/nitrile hydratase NIT4A (349 aa).

Residues 29-301 (VRATVVQAST…EALISADLDL (273 aa)) form the CN hydrolase domain. Glu-69 serves as the catalytic Proton acceptor. Residue Lys-156 is the Proton donor of the active site. The active-site Nucleophile is the Cys-190.

The protein belongs to the carbon-nitrogen hydrolase superfamily. Nitrilase family. Expressed in roots, stems, cotyledons, leaves and flowers.

Its subcellular location is the cell membrane. It catalyses the reaction a nitrile + 2 H2O = a carboxylate + NH4(+). The catalysed reaction is 3-cyano-L-alanine + 2 H2O = L-aspartate + NH4(+). The enzyme catalyses L-asparagine = 3-cyano-L-alanine + H2O. In terms of biological role, highly specific for beta-cyano-L-alanine (Ala(CN)). Low activity with 3-phenylpropionitrile (PPN). Not associated with auxin production but may be involved in cyanide detoxification. The protein is Bifunctional nitrilase/nitrile hydratase NIT4A (NIT4A) of Nicotiana tabacum (Common tobacco).